The chain runs to 447 residues: MLHRYLPMTEEDKKEMLQTIGVQTIDELFSDIPESVRFKGDLKIKEAKSEPELLKELSQIASKNANLKEYASFLGAGVYDHYAPVIVDHVISRSEFYTAYTPYQPEISQGELQAIFEFQTMICELTGMDVANSSMYDGGTALAEAAMLAAGHTRKKKILVSSAVHPESRAVLETYAKGQHLEVVEINHKDGVTDLDVLQSEVDDTVACVIVQYPNFFGQVEKLADIEKIVHQQKSLFIVSSNPLSLGALTPPGKFGADIVIGDAQPFGIPTQFGGPHCGYFATTKAFMRKIPGRLVGQTVDSDGKRGFVLTLQAREQHIRRDKATSNICSNQALNALAASVAMTALGKQGVKEMARQNISKAQYAKRQFEAKGFTVTFAGPFFNEFVVDCKRPVKEVNDALLQKNIIGGYDLGRDYKEHENHMLVAVTELRTKEEIDTLVNEMGAIQ.

It belongs to the GcvP family. N-terminal subunit subfamily. The glycine cleavage system is composed of four proteins: P, T, L and H. In this organism, the P 'protein' is a heterodimer of two subunits.

The catalysed reaction is N(6)-[(R)-lipoyl]-L-lysyl-[glycine-cleavage complex H protein] + glycine + H(+) = N(6)-[(R)-S(8)-aminomethyldihydrolipoyl]-L-lysyl-[glycine-cleavage complex H protein] + CO2. Functionally, the glycine cleavage system catalyzes the degradation of glycine. The P protein binds the alpha-amino group of glycine through its pyridoxal phosphate cofactor; CO(2) is released and the remaining methylamine moiety is then transferred to the lipoamide cofactor of the H protein. The protein is Probable glycine dehydrogenase (decarboxylating) subunit 1 of Bacillus thuringiensis subsp. konkukian (strain 97-27).